The chain runs to 324 residues: NADH-ubiquinone oxidoreductase chain 1 (324 aa).

A run of 8 helical transmembrane segments spans residues 3–23 (LLFM…AVAF), 73–93 (LLFI…WTPF), 106–126 (ILFI…SGWA), 151–171 (ALII…AFAI), 175–195 (FTWF…STLA), 226–246 (LFFL…TIIF), 255–275 (TLTT…FLWV), and 295–315 (FLPL…SLLF).

It belongs to the complex I subunit 1 family.

Its subcellular location is the mitochondrion inner membrane. The enzyme catalyses a ubiquinone + NADH + 5 H(+)(in) = a ubiquinol + NAD(+) + 4 H(+)(out). Its function is as follows. Core subunit of the mitochondrial membrane respiratory chain NADH dehydrogenase (Complex I) that is believed to belong to the minimal assembly required for catalysis. Complex I functions in the transfer of electrons from NADH to the respiratory chain. The immediate electron acceptor for the enzyme is believed to be ubiquinone. The protein is NADH-ubiquinone oxidoreductase chain 1 (MT-ND1) of Aquarana catesbeiana (American bullfrog).